Here is a 633-residue protein sequence, read N- to C-terminus: Probable extracellular metalloproteinase 5 (633 aa).

The signal sequence occupies residues Met-1–Ala-20. Positions His-21–His-244 are excised as a propeptide. N-linked (GlcNAc...) asparagine glycosylation occurs at Asn-285. His-428 contributes to the Zn(2+) binding site. Residue Glu-429 is part of the active site. His-432 contacts Zn(2+). N-linked (GlcNAc...) asparagine glycans are attached at residues Asn-592 and Asn-621.

The protein belongs to the peptidase M36 family. Requires Zn(2+) as cofactor.

Its subcellular location is the secreted. Functionally, secreted metalloproteinase probably acting as a virulence factor. In Arthroderma benhamiae (strain ATCC MYA-4681 / CBS 112371) (Trichophyton mentagrophytes), this protein is Probable extracellular metalloproteinase 5 (MEP5).